The sequence spans 413 residues: MIEELGLKVKKASKEVAKLSTADKNVFLQNLADSLIENTDRIISENEKDLANALEHGISEIMDDRLRLNAQRISDMATGLRQVAELPDPIRQVLQGFTNLDGLKILQKRVPLGTVGMIFESRPNVTIDAFSLCFKTGNSVLLRGGSDAIYSNMVLVEIIKENLLSAKITDGAVELLSDTSHAEAEKMMQADKFLDVLIPRGSARLINRVKEKATVPVIETGVGNCTIFVDESADLEMATKIVINAKTQRPSVCNAAESLVVHAKIADEFLPKLENEINKVHEIEFRADERALKVLSAGIPATDDDFGTEFLDYILSVKTVDNLDEAIEHINTYSSRHSESIVTHDYFNAQKFQDEIDAAAVYVNASTRFTDGFVFGLGAEIGISTQKLHARGPMGLEALTSTKYLIDGTGQIR.

The protein belongs to the gamma-glutamyl phosphate reductase family.

The protein localises to the cytoplasm. The enzyme catalyses L-glutamate 5-semialdehyde + phosphate + NADP(+) = L-glutamyl 5-phosphate + NADPH + H(+). It functions in the pathway amino-acid biosynthesis; L-proline biosynthesis; L-glutamate 5-semialdehyde from L-glutamate: step 2/2. Functionally, catalyzes the NADPH-dependent reduction of L-glutamate 5-phosphate into L-glutamate 5-semialdehyde and phosphate. The product spontaneously undergoes cyclization to form 1-pyrroline-5-carboxylate. The polypeptide is Gamma-glutamyl phosphate reductase (Lactococcus lactis subsp. lactis (strain IL1403) (Streptococcus lactis)).